A 722-amino-acid polypeptide reads, in one-letter code: Bifunctional UDP-N-acetylglucosamine 2-epimerase/N-acetylmannosamine kinase (722 aa).

Residues arginine 19, serine 23, arginine 113, histidine 220, and asparagine 253 each coordinate UDP. Lysine 259, glutamate 271, lysine 280, and histidine 281 together coordinate CMP-N-acetyl-beta-neuraminate. UDP contacts are provided by valine 282, serine 301, serine 302, glutamate 307, and arginine 321. The N-acetylmannosamine kinase stretch occupies residues 406-722 (TLSALAVDLG…VLDYTTRRIY (317 aa)). Aspartate 413 contributes to the Mg(2+) binding site. An an N-acyl-D-mannosamine 6-phosphate-binding site is contributed by glycine 416. The ADP site is built by threonine 417, asparagine 418, and arginine 420. Residues glycine 476, arginine 477, threonine 489, asparagine 516, aspartate 517, and glycine 545 each coordinate an N-acyl-D-mannosamine 6-phosphate. The an N-acyl-D-mannosamine site is built by glycine 476, arginine 477, threonine 489, asparagine 516, and aspartate 517. Residue aspartate 517 is part of the active site. An N-acyl-D-mannosamine-binding residues include glutamate 566 and histidine 569. Histidine 569 is an an N-acyl-D-mannosamine 6-phosphate binding site. Histidine 569, cysteine 579, cysteine 581, and cysteine 586 together coordinate Zn(2+). Residue glutamate 588 participates in an N-acyl-D-mannosamine 6-phosphate binding. Glutamate 588 provides a ligand contact to an N-acyl-D-mannosamine.

The protein in the N-terminal section; belongs to the UDP-N-acetylglucosamine 2-epimerase family. This sequence in the C-terminal section; belongs to the ROK (NagC/XylR) family. In terms of assembly, homodimer. Homotetramer. Homohexamer. The hexameric form exhibits both enzyme activities, whereas the dimeric form only catalyzes the phosphorylation of N-acyl-D-mannosamine. Post-translationally, phosphorylated. Phosphorylation by PKC activates the UDP-N-acetylglucosamine 2-epimerase activity. Highest expression in liver and placenta. Also found in heart, brain, lung, kidney, skeletal muscle and pancreas. Isoform 1 is expressed in heart, brain, kidney, liver, placenta, lung, spleen, pancreas, skeletal muscle and colon. Isoform 2 is expressed mainly in placenta, but also in brain, kidney, liver, lung, pancreas and colon. Isoform 3 is expressed at low level in kidney, liver, placenta and colon.

The protein resides in the cytoplasm. Its subcellular location is the cytosol. The enzyme catalyses UDP-N-acetyl-alpha-D-glucosamine + H2O = aldehydo-N-acetyl-D-mannosamine + UDP + H(+). The catalysed reaction is an N-acyl-D-mannosamine + ATP = an N-acyl-D-mannosamine 6-phosphate + ADP + H(+). The protein operates within amino-sugar metabolism; N-acetylneuraminate biosynthesis. Its activity is regulated as follows. The UDP-N-acetylglucosamine 2-epimerase activity, in contrast to the N-acetylmannosamine kinase activity, exhibits allosteric regulation by cytidine monophosphate-N-acetylneuraminic acid (CMP-Neu5Ac), the end product of neuraminic acid biosynthesis. Moreover, the activity is contingent upon the oligomeric state of the enzyme. The monomeric form is inactive, while the dimeric form selectively catalyzes the phosphorylation of N-acetylmannosamine. The hexameric form, on the other hand, demonstrates full proficiency in both enzyme activities. Furthermore, the UDP-N-acetylglucosamine 2-epimerase activity is increased by PKC-mediated phosphorylation. Functionally, bifunctional enzyme that possesses both UDP-N-acetylglucosamine 2-epimerase and N-acetylmannosamine kinase activities, and serves as the initiator of the biosynthetic pathway leading to the production of N-acetylneuraminic acid (NeuAc), a critical precursor in the synthesis of sialic acids. By catalyzing this pivotal and rate-limiting step in sialic acid biosynthesis, this enzyme assumes a pivotal role in governing the regulation of cell surface sialylation, playing a role in embryonic angiogenesis. Sialic acids represent a category of negatively charged sugars that reside on the surface of cells as terminal components of glycoconjugates and mediate important functions in various cellular processes, including cell adhesion, signal transduction, and cellular recognition. This is Bifunctional UDP-N-acetylglucosamine 2-epimerase/N-acetylmannosamine kinase from Homo sapiens (Human).